The chain runs to 44 residues: Defensin heliomicin (44 aa).

3 disulfides stabilise this stretch: Cys7/Cys32, Cys18/Cys40, and Cys22/Cys42.

The protein localises to the secreted. Its function is as follows. This peptide has potent anti-fungal activity. Has no activity against Gram-negative and Gram-positive bacteria. This is Defensin heliomicin from Heliothis virescens (Tobacco budworm moth).